We begin with the raw amino-acid sequence, 356 residues long: Phosphoribosyl pyrophosphate synthase-associated protein 1 (356 aa).

Met1 bears the N-acetylmethionine mark. Ser177 and Ser215 each carry phosphoserine.

It belongs to the ribose-phosphate pyrophosphokinase family. Binds to PRPS1 and PRPS2.

Functionally, seems to play a negative regulatory role in 5-phosphoribose 1-diphosphate synthesis. The protein is Phosphoribosyl pyrophosphate synthase-associated protein 1 (PRPSAP1) of Bos taurus (Bovine).